A 1852-amino-acid chain; its full sequence is Dihydropyridine-sensitive L-type skeletal muscle calcium channel subunit alpha-1 (1852 aa).

Residues Met-1 to Lys-70 are Cytoplasmic-facing. The stretch at Asn-57–Phe-354 is one I repeat. A helical membrane pass occupies residues Pro-71–Ala-86. Residues Leu-87–Ser-107 lie on the Extracellular side of the membrane. Residues Asn-99 and Asn-102 are each glycosylated (N-linked (GlcNAc...) asparagine). Residues Leu-108–Tyr-127 form a helical membrane-spanning segment. The Cytoplasmic segment spans residues Gly-128–Asn-139. A helical membrane pass occupies residues Cys-140 to Thr-155. The Extracellular segment spans residues Leu-156–Asp-176. A helical transmembrane segment spans residues Met-177–Val-195. Over Pro-196–His-214 the chain is Cytoplasmic. The chain crosses the membrane as a helical span at residues Ile-215–Phe-234. The Extracellular portion of the chain corresponds to Lys-235–Trp-326. Asn-274 carries N-linked (GlcNAc...) asparagine glycosylation. The helical transmembrane segment at Pro-327 to Ser-351 threads the bilayer. At Gly-352–Lys-447 the chain is on the cytoplasmic side. The binding to the beta subunit stretch occupies residues Gln-374–Glu-391. An II repeat occupies Asn-433–Leu-679. A helical transmembrane segment spans residues Phe-448–Met-466. Topologically, residues Glu-467–Thr-481 are extracellular. N-linked (GlcNAc...) asparagine glycosylation is present at Asn-470. The chain crosses the membrane as a helical span at residues Ala-482–Phe-501. Over Gly-502–Ser-509 the chain is Cytoplasmic. Residues Ile-510–Leu-528 form a helical membrane-spanning segment. The Extracellular portion of the chain corresponds to Val-529 to Gly-538. A helical transmembrane segment spans residues Ile-539–Trp-557. Over Thr-558–Ser-576 the chain is Cytoplasmic. The chain crosses the membrane as a helical span at residues Leu-577–Phe-596. Residues Gly-597–Leu-651 lie on the Extracellular side of the membrane. Residues Val-652–Ala-675 form a helical membrane-spanning segment. The Cytoplasmic segment spans residues Val-676–Thr-815. One copy of the III repeat lies at His-802 to Phe-1084. Residues Thr-816–Ala-834 form a helical membrane-spanning segment. The Extracellular segment spans residues Glu-835–Tyr-850. The chain crosses the membrane as a helical span at residues Ala-851 to Tyr-870. Residues Gly-871 to Asn-882 are Cytoplasmic-facing. A helical membrane pass occupies residues Ser-883 to Met-901. Residues Glu-902–Val-908 are Extracellular-facing. The chain crosses the membrane as a helical span at residues Val-909 to Ala-927. Residues Lys-928–Asn-946 are Cytoplasmic-facing. The chain crosses the membrane as a helical span at residues Ile-947–Phe-966. The Extracellular portion of the chain corresponds to Lys-967–Gly-1056. Residues Arg-1004–Lys-1093 form a dihydropyridine binding region. A helical membrane pass occupies residues Ile-1057–Ile-1081. Topologically, residues Val-1082–Cys-1134 are cytoplasmic. Residues Asn-1121–Val-1405 form an IV repeat. A helical membrane pass occupies residues Tyr-1135–Ile-1153. The Extracellular segment spans residues Gln-1154–Thr-1168. Asn-1157 carries an N-linked (GlcNAc...) asparagine glycan. A helical transmembrane segment spans residues Leu-1169–Phe-1188. Over Lys-1189–Asp-1196 the chain is Cytoplasmic. A helical membrane pass occupies residues Pro-1197–Leu-1215. At Ser-1216–Ser-1252 the chain is on the extracellular side. Residues Ile-1253–Ser-1271 form a helical membrane-spanning segment. Residues Glu-1272–His-1290 lie on the Cytoplasmic side of the membrane. Residues Val-1291–Phe-1310 form a helical membrane-spanning segment. The Extracellular portion of the chain corresponds to Gly-1311 to Ile-1377. Positions Leu-1358 to Lys-1424 are dihydropyridine binding. The tract at residues Glu-1370–Ser-1413 is phenylalkylamine binding. Residues Ala-1378–Met-1402 form a helical membrane-spanning segment. The Cytoplasmic segment spans residues Asp-1403 to Val-1852. One can recognise an EF-hand domain in the interval His-1418 to Pro-1453. Ca(2+)-binding residues include Asp-1431, Glu-1433, Thr-1435, Arg-1437, and Asp-1442. The interval Asn-1820 to Val-1852 is disordered.

Belongs to the calcium channel alpha-1 subunit (TC 1.A.1.11) family. In terms of assembly, multisubunit complex consisting of alpha-1, alpha-2, beta and delta subunits in a 1:1:1:1 ratio. The channel activity is directed by the pore-forming and voltage-sensitive alpha-1 subunit. In many cases, this subunit is sufficient to generate voltage-sensitive calcium channel activity. The auxiliary subunits beta and alpha-2/delta linked by a disulfide bridge regulate the channel activity. An additional gamma subunit is present only in skeletal muscle L-type channel. In terms of processing, may be non-phosphorylated. In terms of tissue distribution, skeletal muscle.

It localises to the membrane. Voltage-sensitive calcium channels (VSCC) mediate the entry of calcium ions into excitable cells and are also involved in a variety of calcium-dependent processes, including muscle contraction, gene expression, cell motility, cell division and cell death. The isoform alpha-1S gives rise to L-type calcium currents. Long-lasting (L-type) calcium channels belong to the 'high-voltage activated' (HVA) group. They are blocked by dihydropyridines (DHP), phenylalkylamines, and by benzothiazepines. Calcium channels containing the alpha-1S subunit play an important role in excitation-contraction coupling in skeletal muscle. The protein is Dihydropyridine-sensitive L-type skeletal muscle calcium channel subunit alpha-1 of Cyprinus carpio (Common carp).